Reading from the N-terminus, the 578-residue chain is Putative fatty-acid--CoA ligase fadD21 (578 aa).

The protein belongs to the ATP-dependent AMP-binding enzyme family.

The sequence is that of Putative fatty-acid--CoA ligase fadD21 (fadD21) from Mycobacterium bovis (strain ATCC BAA-935 / AF2122/97).